The chain runs to 956 residues: Dual specificity protein kinase YAK1 homolog (956 aa).

Residues 122-464 (YIVKDLLGHG…PFQAAKHPFI (343 aa)) enclose the Protein kinase domain. ATP is bound by residues 128 to 136 (LGHGTFGQV) and lysine 151. Serine 222 is modified (phosphoserine). Aspartate 249 serves as the catalytic Proton acceptor. Disordered regions lie at residues 620 to 657 (LGTS…HGSP), 672 to 781 (SAGY…NYSD), and 806 to 956 (GSTD…GSIA). Polar residues predominate over residues 622–636 (TSPSQFTPNTNNQFL). Low complexity predominate over residues 672–691 (SAGYSGGSQSQDSSLSQAQG). 3 stretches are compositionally biased toward polar residues: residues 697 to 713 (FYQN…SPSR), 725 to 757 (QTQG…SSTA), and 806 to 817 (GSTDASSYSRRF). Residues 818–830 (NSNASTSSSNPTT) show a composition bias toward low complexity. Composition is skewed to polar residues over residues 838–849 (QAFSQVETGSPP), 870–884 (VSQN…QPPQ), and 902–912 (MNAQLPPSNTN). Low complexity predominate over residues 913-924 (SGGQQRSPRSSS). Residues 937–947 (NHVPNVPSTSH) show a composition bias toward polar residues.

This sequence belongs to the protein kinase superfamily. Ser/Thr protein kinase family. Post-translationally, autophosphorylated at Ser-222.

It catalyses the reaction L-seryl-[protein] + ATP = O-phospho-L-seryl-[protein] + ADP + H(+). The enzyme catalyses L-threonyl-[protein] + ATP = O-phospho-L-threonyl-[protein] + ADP + H(+). The catalysed reaction is L-tyrosyl-[protein] + ATP = O-phospho-L-tyrosyl-[protein] + ADP + H(+). Dual specificity protein kinase that phosphorylates ANN1, ANN2 and CP29B at serine and threonine residues, and ANN1, ANN2 and ANN4 at tyrosine residues. May regulate the phosphorylation status of annexin proteins. Acts as a positive regulator in abscisic acid (ABA)-mediated regulation of postgermination growth and drought response. May regulate the expression of ABA-responsive genes such as RD22, RD29A, LTI65/RD29B and RAB18. This Arabidopsis thaliana (Mouse-ear cress) protein is Dual specificity protein kinase YAK1 homolog.